Consider the following 111-residue polypeptide: uncharacterized protein (111 aa).

It is found in the cytoplasm. It localises to the nucleus. This is an uncharacterized protein from Saccharomyces cerevisiae (strain ATCC 204508 / S288c) (Baker's yeast).